The sequence spans 350 residues: Phosphotriesterase-related protein (350 aa).

The a divalent metal cation site is built by His22, His24, Glu169, His201, His230, and Asp298.

It belongs to the metallo-dependent hydrolases superfamily. Phosphotriesterase family. The cofactor is a divalent metal cation.

The sequence is that of Phosphotriesterase-related protein from Drosophila ananassae (Fruit fly).